The chain runs to 248 residues: Granulin (248 aa).

Belongs to the polyhedrin family.

In terms of biological role, component of the virus occlusion bodies, which are large proteinaceous structures, that protect the virus from the outside environment for extended periods until they are ingested by insect larvae. The chain is Granulin from Cydia pomonella (Codling moth).